The following is a 97-amino-acid chain: Putative CC-type chemokine U83 (97 aa).

Cystine bridges form between Cys32–Cys62 and Cys33–Cys76.

This sequence belongs to the intercrine beta (chemokine CC) family. Highly divergent.

The polypeptide is Putative CC-type chemokine U83 (U83) (Human herpesvirus 6A (strain Uganda-1102) (HHV-6 variant A)).